A 56-amino-acid chain; its full sequence is Small ribosomal subunit protein bS21 (56 aa).

The protein belongs to the bacterial ribosomal protein bS21 family.

This is Small ribosomal subunit protein bS21 (rpsU) from Geobacillus stearothermophilus (Bacillus stearothermophilus).